A 307-amino-acid chain; its full sequence is Ornithine carbamoyltransferase (307 aa).

Carbamoyl phosphate contacts are provided by residues 50–53 (STRT), Q77, R101, and 128–131 (HPCQ). L-ornithine-binding positions include N160, D224, and 228-229 (SM). Carbamoyl phosphate is bound by residues 264-265 (CL) and R292.

This sequence belongs to the aspartate/ornithine carbamoyltransferase superfamily. OTCase family.

It localises to the cytoplasm. The catalysed reaction is carbamoyl phosphate + L-ornithine = L-citrulline + phosphate + H(+). The protein operates within amino-acid biosynthesis; L-arginine biosynthesis; L-arginine from L-ornithine and carbamoyl phosphate: step 1/3. Inhibited by arginine, norvaline. Reversibly catalyzes the transfer of the carbamoyl group from carbamoyl phosphate (CP) to the N(epsilon) atom of ornithine (ORN) to produce L-citrulline, which is a substrate for argininosuccinate synthetase, the enzyme involved in the final step in arginine biosynthesis. In Mycolicibacterium smegmatis (strain ATCC 700084 / mc(2)155) (Mycobacterium smegmatis), this protein is Ornithine carbamoyltransferase.